The sequence spans 130 residues: Sec-independent protein translocase protein TatB (130 aa).

The helical transmembrane segment at 1 to 21 threads the bilayer; the sequence is MFDISFTELIVIGIVALVVIG. The segment at 70-130 is disordered; sequence VDSFQNSVHS…TPKEPRQSGS (61 aa). Composition is skewed to basic and acidic residues over residues 80–89 and 96–111; these read EINKIQETAD and PEKESHAVESGGKTEP.

This sequence belongs to the TatB family. As to quaternary structure, the Tat system comprises two distinct complexes: a TatABC complex, containing multiple copies of TatA, TatB and TatC subunits, and a separate TatA complex, containing only TatA subunits. Substrates initially bind to the TatABC complex, which probably triggers association of the separate TatA complex to form the active translocon.

The protein resides in the cell inner membrane. Part of the twin-arginine translocation (Tat) system that transports large folded proteins containing a characteristic twin-arginine motif in their signal peptide across membranes. Together with TatC, TatB is part of a receptor directly interacting with Tat signal peptides. TatB may form an oligomeric binding site that transiently accommodates folded Tat precursor proteins before their translocation. The polypeptide is Sec-independent protein translocase protein TatB (Nitrosomonas eutropha (strain DSM 101675 / C91 / Nm57)).